Reading from the N-terminus, the 185-residue chain is Ribosome-recycling factor (185 aa).

The protein belongs to the RRF family.

It is found in the cytoplasm. Functionally, responsible for the release of ribosomes from messenger RNA at the termination of protein biosynthesis. May increase the efficiency of translation by recycling ribosomes from one round of translation to another. This is Ribosome-recycling factor from Haemophilus ducreyi (strain 35000HP / ATCC 700724).